A 547-amino-acid chain; its full sequence is CTP synthase (547 aa).

The amidoligase domain stretch occupies residues 1–265 (MARYVFITGG…DQAVLDAFGI (265 aa)). Serine 13 serves as a coordination point for CTP. Serine 13 is a UTP binding site. ATP is bound by residues 14–19 (SLGKGL) and aspartate 71. Residues aspartate 71 and glutamate 139 each coordinate Mg(2+). Residues 146-148 (DIE), 186-191 (KTKPTQ), and lysine 222 contribute to the CTP site. UTP is bound by residues 186-191 (KTKPTQ) and lysine 222. Residues 291 to 546 (RVAIVGKYTQ…IRAAVEVSRL (256 aa)) form the Glutamine amidotransferase type-1 domain. Glycine 353 contacts L-glutamine. The active-site Nucleophile; for glutamine hydrolysis is cysteine 380. L-glutamine is bound by residues 381 to 384 (LGMQ), glutamate 404, and arginine 474. Residues histidine 519 and glutamate 521 contribute to the active site.

Belongs to the CTP synthase family. As to quaternary structure, homotetramer.

It carries out the reaction UTP + L-glutamine + ATP + H2O = CTP + L-glutamate + ADP + phosphate + 2 H(+). The catalysed reaction is L-glutamine + H2O = L-glutamate + NH4(+). It catalyses the reaction UTP + NH4(+) + ATP = CTP + ADP + phosphate + 2 H(+). It participates in pyrimidine metabolism; CTP biosynthesis via de novo pathway; CTP from UDP: step 2/2. With respect to regulation, allosterically activated by GTP, when glutamine is the substrate; GTP has no effect on the reaction when ammonia is the substrate. The allosteric effector GTP functions by stabilizing the protein conformation that binds the tetrahedral intermediate(s) formed during glutamine hydrolysis. Inhibited by the product CTP, via allosteric rather than competitive inhibition. Its function is as follows. Catalyzes the ATP-dependent amination of UTP to CTP with either L-glutamine or ammonia as the source of nitrogen. Regulates intracellular CTP levels through interactions with the four ribonucleotide triphosphates. This chain is CTP synthase, found in Cereibacter sphaeroides (strain ATCC 17025 / ATH 2.4.3) (Rhodobacter sphaeroides).